The primary structure comprises 304 residues: Glycine--tRNA ligase alpha subunit (304 aa).

Belongs to the class-II aminoacyl-tRNA synthetase family. As to quaternary structure, tetramer of two alpha and two beta subunits.

The protein resides in the cytoplasm. The enzyme catalyses tRNA(Gly) + glycine + ATP = glycyl-tRNA(Gly) + AMP + diphosphate. This chain is Glycine--tRNA ligase alpha subunit, found in Photorhabdus laumondii subsp. laumondii (strain DSM 15139 / CIP 105565 / TT01) (Photorhabdus luminescens subsp. laumondii).